The sequence spans 440 residues: R3H and coiled-coil domain-containing protein 1 (440 aa).

Positions 16-81 (NDFVHRIQEE…KRRTVICHQD (66 aa)) constitute an R3H domain. The interval 154 to 225 (TSVLKREAPA…LGPESQSGKG (72 aa)) is disordered. Residues 157–168 (LKREAPAGRDPE) show a composition bias toward basic and acidic residues. Serine 236 carries the phosphoserine modification. The stretch at 242–300 (LEKGKESLLEKRLVAEEEEDEEEVEEDGPSSCSEDDYSELLQEITDNLTKKEIQIEKIH) forms a coiled coil. A disordered region spans residues 254-276 (LVAEEEEDEEEVEEDGPSSCSED). Acidic residues predominate over residues 257–276 (EEEEDEEEVEEDGPSSCSED).

This is R3H and coiled-coil domain-containing protein 1 from Homo sapiens (Human).